We begin with the raw amino-acid sequence, 113 residues long: Putative membrane protein insertion efficiency factor (113 aa).

The protein belongs to the UPF0161 family.

The protein localises to the cell inner membrane. In terms of biological role, could be involved in insertion of integral membrane proteins into the membrane. This is Putative membrane protein insertion efficiency factor from Campylobacter jejuni subsp. jejuni serotype O:23/36 (strain 81-176).